We begin with the raw amino-acid sequence, 500 residues long: Cytochrome P450 2D26 (500 aa).

Phosphoserine is present on S249. Residue C446 coordinates heme.

Belongs to the cytochrome P450 family. Requires heme as cofactor.

The protein resides in the endoplasmic reticulum membrane. Its subcellular location is the microsome membrane. It catalyses the reaction an organic molecule + reduced [NADPH--hemoprotein reductase] + O2 = an alcohol + oxidized [NADPH--hemoprotein reductase] + H2O + H(+). Its function is as follows. Cytochromes P450 are a group of heme-thiolate monooxygenases. In liver microsomes, this enzyme is involved in an NADPH-dependent electron transport pathway. It oxidizes a variety of structurally unrelated compounds, including steroids, fatty acids, and xenobiotics. The polypeptide is Cytochrome P450 2D26 (Cyp2d26) (Rattus norvegicus (Rat)).